Reading from the N-terminus, the 204-residue chain is Protein GrpE (204 aa).

The span at 1 to 12 shows a compositional bias: basic and acidic residues; that stretch reads MSNQEKKMHEEE. The tract at residues 1–37 is disordered; sequence MSNQEKKMHEEELQQQETVEADTEAEAEAVGTDADIE.

This sequence belongs to the GrpE family. As to quaternary structure, homodimer.

It localises to the cytoplasm. Functionally, participates actively in the response to hyperosmotic and heat shock by preventing the aggregation of stress-denatured proteins, in association with DnaK and GrpE. It is the nucleotide exchange factor for DnaK and may function as a thermosensor. Unfolded proteins bind initially to DnaJ; upon interaction with the DnaJ-bound protein, DnaK hydrolyzes its bound ATP, resulting in the formation of a stable complex. GrpE releases ADP from DnaK; ATP binding to DnaK triggers the release of the substrate protein, thus completing the reaction cycle. Several rounds of ATP-dependent interactions between DnaJ, DnaK and GrpE are required for fully efficient folding. This chain is Protein GrpE, found in Vibrio proteolyticus (Aeromonas proteolytica).